Consider the following 242-residue polypeptide: Uridylate kinase (242 aa).

15-18 (KLSG) serves as a coordination point for ATP. Residue G57 coordinates UMP. ATP contacts are provided by G58 and R62. Residues D78 and 139 to 146 (TGNPFFTT) contribute to the UMP site. Positions 166, 172, and 175 each coordinate ATP.

It belongs to the UMP kinase family. As to quaternary structure, homohexamer.

It localises to the cytoplasm. It carries out the reaction UMP + ATP = UDP + ADP. It functions in the pathway pyrimidine metabolism; CTP biosynthesis via de novo pathway; UDP from UMP (UMPK route): step 1/1. Inhibited by UTP. In terms of biological role, catalyzes the reversible phosphorylation of UMP to UDP. The protein is Uridylate kinase of Acinetobacter baylyi (strain ATCC 33305 / BD413 / ADP1).